A 462-amino-acid chain; its full sequence is uncharacterized protein (462 aa).

The tract at residues 1-108 (MEDSNTNKDI…NGQDDQDEMD (108 aa)) is disordered. A compositionally biased stretch (basic and acidic residues) spans 36 to 51 (TVERILERKQKERESK). The span at 64 to 95 (SSPSSLLSSPISSNDNNNNNNNNNNESFDINN) shows a compositional bias: low complexity. A coiled-coil region spans residues 119–150 (LLKRKAALAAKKKESLAEQMKKYNQQYDSIIS). Residues 188-208 (SKLQSLNNNTSPSTSSSNLID) are disordered. Positions 190 to 208 (LQSLNNNTSPSTSSSNLID) are enriched in low complexity.

This is an uncharacterized protein from Dictyostelium discoideum (Social amoeba).